The following is a 245-amino-acid chain: DNA polymerase sliding clamp 2 (245 aa).

This sequence belongs to the PCNA family. Forms homodimers with PCNA1, which then recruit PCNA3; does not form homotrimers. The heterodimers interact with RfcS homotetramers. Heterotrimer which circularizes head-to-tail (head is at N-terminus, tail is at C-terminus) to form a toroid; DNA passes through its center. Replication factor C (RFC) is required to load the toroid on the DNA. This subunit interacts with DNA polymerase I (dpo1). The heterotrimer also interacts with flap endonuclease 1, DNA ligase and XPF via the other subunits.

In terms of biological role, one of the sliding clamp subunits that acts as a moving platform for DNA processing. Responsible for tethering the catalytic subunit of DNA polymerase to DNA during high-speed replication. Heterotrimer stimulates the Holliday junction resolvase Hjc. DNA polymerase I, DNA ligase and the flap endonuclease may be constitutively associated with the PCNA heterotrimer forming a scanning complex able to couple DNA synthesis and Okazaki fragment maturation. The sequence is that of DNA polymerase sliding clamp 2 from Saccharolobus solfataricus (strain ATCC 35092 / DSM 1617 / JCM 11322 / P2) (Sulfolobus solfataricus).